A 92-amino-acid chain; its full sequence is UPF0250 protein XOO3732 (92 aa).

The protein belongs to the UPF0250 family.

The sequence is that of UPF0250 protein XOO3732 from Xanthomonas oryzae pv. oryzae (strain MAFF 311018).